Consider the following 244-residue polypeptide: Phosphonates import ATP-binding protein PhnC 2 (244 aa).

The 239-residue stretch at 6 to 244 (IECHNLETAY…LQAQFVVNNQ (239 aa)) folds into the ABC transporter domain. 41 to 48 (GLNGAGKS) is an ATP binding site.

Belongs to the ABC transporter superfamily. Phosphonates importer (TC 3.A.1.9.1) family. As to quaternary structure, the complex is composed of two ATP-binding proteins (PhnC), two transmembrane proteins (PhnE) and a solute-binding protein (PhnD).

Its subcellular location is the cell inner membrane. It catalyses the reaction phosphonate(out) + ATP + H2O = phosphonate(in) + ADP + phosphate + H(+). Part of the ABC transporter complex PhnCDE involved in phosphonates import. Responsible for energy coupling to the transport system. This chain is Phosphonates import ATP-binding protein PhnC 2, found in Nostoc sp. (strain PCC 7120 / SAG 25.82 / UTEX 2576).